The following is a 364-amino-acid chain: Cobalt-precorrin-5B C(1)-methyltransferase (364 aa).

The protein belongs to the CbiD family.

The enzyme catalyses Co-precorrin-5B + S-adenosyl-L-methionine = Co-precorrin-6A + S-adenosyl-L-homocysteine. Its pathway is cofactor biosynthesis; adenosylcobalamin biosynthesis; cob(II)yrinate a,c-diamide from sirohydrochlorin (anaerobic route): step 6/10. In terms of biological role, catalyzes the methylation of C-1 in cobalt-precorrin-5B to form cobalt-precorrin-6A. The chain is Cobalt-precorrin-5B C(1)-methyltransferase from Pseudomonas putida (strain GB-1).